We begin with the raw amino-acid sequence, 136 residues long: Histone H3.1/H3.2 (136 aa).

The segment at 1-43 (MARTKQTARKSTGGKAPRKQLASKAARKSAPSTGGVKKPHRYK) is disordered. Lys5 carries the post-translational modification N6,N6,N6-trimethyllysine; alternate. Residue Lys5 is modified to N6,N6-dimethyllysine; alternate. Residues Lys5 and Lys10 each carry the N6-methyllysine; alternate modification. Lys10 carries the N6-acetyllysine; alternate modification. A Phosphoserine modification is found at Ser11. Lys15 is subject to N6,N6-dimethyllysine; alternate. Residues Lys15, Lys19, Lys24, Lys28, and Lys37 each carry the N6-acetyllysine; alternate modification. Lys19, Lys24, Lys28, and Lys37 each carry N6-methyllysine; alternate. N6,N6,N6-trimethyllysine; alternate is present on residues Lys28 and Lys37. N6,N6-dimethyllysine; alternate occurs at positions 28 and 37. An N6-acetyllysine mark is found at Lys57 and Lys65. Residue Lys80 is modified to N6,N6,N6-trimethyllysine; alternate. Residue Lys80 is modified to N6,N6-dimethyllysine; alternate. Lys80 carries the post-translational modification N6-methyllysine; alternate.

Belongs to the histone H3 family. As to quaternary structure, the nucleosome is a histone octamer containing two molecules each of H2A, H2B, H3 and H4 assembled in one H3-H4 heterotetramer and two H2A-H2B heterodimers. The octamer wraps approximately 147 bp of DNA. In terms of processing, phosphorylated to form H3S10ph. H3S10ph promotes subsequent H3K14ac formation and is required for transcriptional activation through TBP recruitment to the promoters. Mono-, di- and trimethylated by the COMPASS complex to form H3K4me1/2/3. H3K4me activates gene expression by regulating transcription elongation and plays a role in telomere length maintenance. H3K4me enrichment correlates with transcription levels, and occurs in a 5' to 3' gradient with H3K4me3 enrichment at the 5'-end of genes, shifting to H3K4me2 and then H3K4me1. Methylated by SET2 to form H3K36me. H3K36me represses gene expression. Methylated by DOT1 to form H3K79me. H3K79me is required for association of SIR proteins with telomeric regions and for telomeric silencing. The COMPASS-mediated formation of H3K4me2/3 and the DOT1-mediated formation of H3K79me require H2BK123ub1. Post-translationally, acetylation of histone H3 leads to transcriptional activation. H3K14ac formation by GCN5 is promoted by H3S10ph. H3K14ac can also be formed by ESA1. H3K56ac formation occurs predominantly in newly synthesized H3 molecules during G1, S and G2/M of the cell cycle and may be involved in DNA repair.

Its subcellular location is the nucleus. The protein localises to the chromosome. Its function is as follows. Core component of nucleosome. Nucleosomes wrap and compact DNA into chromatin, limiting DNA accessibility to the cellular machineries which require DNA as a template. Histones thereby play a central role in transcription regulation, DNA repair, DNA replication and chromosomal stability. DNA accessibility is regulated via a complex set of post-translational modifications of histones, also called histone code, and nucleosome remodeling. This chain is Histone H3.1/H3.2 (HHT1), found in Lodderomyces elongisporus (strain ATCC 11503 / CBS 2605 / JCM 1781 / NBRC 1676 / NRRL YB-4239) (Yeast).